The chain runs to 372 residues: Citrate synthase 2 (372 aa).

H257 is a catalytic residue. A Phosphoserine modification is found at S284. D308 is an active-site residue.

It belongs to the citrate synthase family. Homodimer.

The enzyme catalyses oxaloacetate + acetyl-CoA + H2O = citrate + CoA + H(+). Its pathway is carbohydrate metabolism; tricarboxylic acid cycle; isocitrate from oxaloacetate: step 1/2. Its function is as follows. Might regulate the synthesis and function of enzymes involved in later enzymatic steps of Krebs cycle. Loss in activity results in sporulation defect. This Bacillus subtilis (strain 168) protein is Citrate synthase 2 (citZ).